A 111-amino-acid chain; its full sequence is Protein YibV (111 aa).

The protein is Protein YibV (yibV) of Escherichia coli O157:H7.